A 186-amino-acid chain; its full sequence is Casparian strip membrane protein 5 (186 aa).

Residues 1 to 23 (MEHGEISSKAPLVAPVAAGVNRA) lie on the Cytoplasmic side of the membrane. A helical membrane pass occupies residues 24 to 44 (VAVVDTFLRFIAIIGTIGSAI). Over 45 to 73 (AMGTTNETLPFFTQFIQFEAKYSDLPSFT) the chain is Extracellular. Asparagine 50 carries an N-linked (GlcNAc...) asparagine glycan. A helical membrane pass occupies residues 74–94 (FFVAANAVVCTYLVLSIPLSI). Over 95–106 (VHILRPRARYSR) the chain is Cytoplasmic. Residues 107–127 (LFLVFFDTAMLALLTAGASAA) traverse the membrane as a helical segment. At 128–160 (AAIVYLAHKGNVRANWFSICQQFDSFCERISGS) the chain is on the extracellular side. A helical transmembrane segment spans residues 161–181 (LIGSFAAMVLLVVLITLSAFA). Residues 182–186 (LARRH) are Cytoplasmic-facing.

It belongs to the Casparian strip membrane proteins (CASP) family. Homodimer and heterodimers.

It localises to the cell membrane. Functionally, regulates membrane-cell wall junctions and localized cell wall deposition. Required for establishment of the Casparian strip membrane domain (CSD) and the subsequent formation of Casparian strips, a cell wall modification of the root endodermis that determines an apoplastic barrier between the intraorganismal apoplasm and the extraorganismal apoplasm and prevents lateral diffusion. The protein is Casparian strip membrane protein 5 of Oryza sativa subsp. japonica (Rice).